Consider the following 422-residue polypeptide: Transcription initiation factor TFIID subunit 15b (422 aa).

Disordered stretches follow at residues 1-24 (MAGM…DGYG), 47-94 (YGGR…PNPS), 111-263 (ALAP…DAAT), and 368-422 (MAEK…SRPY). 2 stretches are compositionally biased toward gly residues: residues 8-24 (DGGG…DGYG) and 47-83 (YGGR…GGGG). A RanBP2-type zinc finger spans residues 84 to 115 (RDGDWRCPNPSCGNVNFARRVECNKCGALAPS). Positions 123–133 (DRGGGGYSRGG) are enriched in gly residues. The span at 134–156 (GDSDRGGGRGGRNDSGRSYESSR) shows a compositional bias: basic and acidic residues. 2 stretches are compositionally biased toward gly residues: residues 219-229 (PSYGGPRGGYG) and 236-247 (GGRGGRSGGYDG). A compositionally biased stretch (basic and acidic residues) spans 252–263 (RRQEASYEDAAT). In terms of domain architecture, RRM spans 280–371 (ARIYISNLPP…NKISVTMAEK (92 aa)). Over residues 382–397 (RGGGRGGGGGGYGGGG) the composition is skewed to gly residues.

This sequence belongs to the TAF15 family. Component of the TFIID complex. TFIID is composed of TATA binding protein (TBP) and a number of TBP-associated factors (TAFs) whose MWs range from 14-217 kDa. Interacts with TAF4, TAF4B, TAF5, TAF12B and TAF14. As to expression, expressed in roots, leaves and inflorescences.

The protein resides in the nucleus. TAFs are components of the transcription factor IID (TFIID) complex that is essential for mediating regulation of RNA polymerase transcription. In Arabidopsis thaliana (Mouse-ear cress), this protein is Transcription initiation factor TFIID subunit 15b (TAF15B).